Consider the following 183-residue polypeptide: Inosine/xanthosine triphosphatase (183 aa).

Aspartate 75 contributes to the Mg(2+) binding site. 75–76 (DG) is a binding site for substrate.

Belongs to the YjjX NTPase family. In terms of assembly, homodimer. It depends on Mg(2+) as a cofactor. The cofactor is Mn(2+).

The enzyme catalyses XTP + H2O = XDP + phosphate + H(+). It catalyses the reaction ITP + H2O = IDP + phosphate + H(+). Phosphatase that hydrolyzes non-canonical purine nucleotides such as XTP and ITP to their respective diphosphate derivatives. Probably excludes non-canonical purines from DNA/RNA precursor pool, thus preventing their incorporation into DNA/RNA and avoiding chromosomal lesions. This Vibrio vulnificus (strain YJ016) protein is Inosine/xanthosine triphosphatase.